Reading from the N-terminus, the 148-residue chain is SsrA-binding protein (148 aa).

This sequence belongs to the SmpB family.

The protein localises to the cytoplasm. In terms of biological role, required for rescue of stalled ribosomes mediated by trans-translation. Binds to transfer-messenger RNA (tmRNA), required for stable association of tmRNA with ribosomes. tmRNA and SmpB together mimic tRNA shape, replacing the anticodon stem-loop with SmpB. tmRNA is encoded by the ssrA gene; the 2 termini fold to resemble tRNA(Ala) and it encodes a 'tag peptide', a short internal open reading frame. During trans-translation Ala-aminoacylated tmRNA acts like a tRNA, entering the A-site of stalled ribosomes, displacing the stalled mRNA. The ribosome then switches to translate the ORF on the tmRNA; the nascent peptide is terminated with the 'tag peptide' encoded by the tmRNA and targeted for degradation. The ribosome is freed to recommence translation, which seems to be the essential function of trans-translation. The polypeptide is SsrA-binding protein (Ehrlichia ruminantium (strain Welgevonden)).